The sequence spans 100 residues: Putative antiporter subunit mnhF2 (100 aa).

3 helical membrane-spanning segments follow: residues 6–26 (TNFF…IGLF), 38–58 (VVAF…VSVI), and 62–82 (VSFL…SVSI).

Belongs to the CPA3 antiporters (TC 2.A.63) subunit F family. In terms of assembly, may form a heterooligomeric complex that consists of seven subunits: mnhA2, mnhB2, mnhC2, mnhD2, mnhE2, mnhF2 and mnhG2.

It localises to the cell membrane. This is Putative antiporter subunit mnhF2 (mnhF2) from Staphylococcus haemolyticus (strain JCSC1435).